A 210-amino-acid chain; its full sequence is MMAERFSALQAVAGPVSRETFDGLVAFEGEFRKWSARINLTAPSTLPHLWERHILDSAQLIRIAPAARRWLDLGSGGGFPGAVIAILMKEHAPAQVDLVESNRKKAAFLQTSLASLKAPCMIHPQRIEDCYGQIPPPEVITARALAPLPVLFGLAEPWMKAGARALLHKGRDYRREIEESRDAWGFNLLEHGNEVGGDGVILEISDLRRL.

Residues G74, F79, 127-128 (IE), and R143 contribute to the S-adenosyl-L-methionine site.

Belongs to the methyltransferase superfamily. RNA methyltransferase RsmG family.

The protein localises to the cytoplasm. The catalysed reaction is guanosine(527) in 16S rRNA + S-adenosyl-L-methionine = N(7)-methylguanosine(527) in 16S rRNA + S-adenosyl-L-homocysteine. In terms of biological role, specifically methylates the N7 position of guanine in position 527 of 16S rRNA. The polypeptide is Ribosomal RNA small subunit methyltransferase G (Chelativorans sp. (strain BNC1)).